The primary structure comprises 156 residues: Small ribosomal subunit protein uS7 (156 aa).

This sequence belongs to the universal ribosomal protein uS7 family. As to quaternary structure, part of the 30S ribosomal subunit. Contacts proteins S9 and S11.

In terms of biological role, one of the primary rRNA binding proteins, it binds directly to 16S rRNA where it nucleates assembly of the head domain of the 30S subunit. Is located at the subunit interface close to the decoding center, probably blocks exit of the E-site tRNA. This Rhodopseudomonas palustris (strain BisB18) protein is Small ribosomal subunit protein uS7.